Here is an 84-residue protein sequence, read N- to C-terminus: MSHKKAGGSTRNGRDSNAQRRGVKKFGGQTVVAGNILVRQLGTKIHPGSNVGMGKDYTLFSKIDGVVAYERKGRDKKRVSVYEA.

A disordered region spans residues 1–25 (MSHKKAGGSTRNGRDSNAQRRGVKK).

This sequence belongs to the bacterial ribosomal protein bL27 family.

The chain is Large ribosomal subunit protein bL27 from Desulforapulum autotrophicum (strain ATCC 43914 / DSM 3382 / VKM B-1955 / HRM2) (Desulfobacterium autotrophicum).